We begin with the raw amino-acid sequence, 100 residues long: Large ribosomal subunit protein uL23 (100 aa).

It belongs to the universal ribosomal protein uL23 family. As to quaternary structure, part of the 50S ribosomal subunit. Contacts protein L29, and trigger factor when it is bound to the ribosome.

One of the early assembly proteins it binds 23S rRNA. One of the proteins that surrounds the polypeptide exit tunnel on the outside of the ribosome. Forms the main docking site for trigger factor binding to the ribosome. The protein is Large ribosomal subunit protein uL23 of Mycolicibacterium gilvum (strain PYR-GCK) (Mycobacterium gilvum (strain PYR-GCK)).